Consider the following 338-residue polypeptide: Protein UL141 (338 aa).

The signal sequence occupies residues 1–25; that stretch reads MCRRESLRTLPWLFWVLLSCPRLLE. The Extracellular portion of the chain corresponds to 37–278; the sequence is DIAEKMWAEN…DTGMSPWATR (242 aa). N-linked (GlcNAc...) asparagine; by host glycans are attached at residues Asn117, Asn132, and Asn147. Residues 279–299 traverse the membrane as a helical segment; the sequence is GIAAFLGFWSIFTVCFLCYLC. The Cytoplasmic segment spans residues 300–338; the sequence is YLQCCGHWCPTPGRGRRGGEGYRRLPTYDSYPGVKKMKR.

In terms of assembly, interacts with human PVR. Interacts with human TNFRSF10A and TNFRSF10B. Forms a homodimer that engages two TNFRSF10B monomers.

It localises to the host endoplasmic reticulum membrane. In terms of biological role, evasion of NK cell killing. Blocks surface expression of PVR which is a ligand for NK cell-activating receptors. Binds human PVR in the endoplasmic reticulum and prevents its maturation and transport to the cell surface. Targets also the natural killer cell activating ligand NECTIN2 for proteasome-mediated degradation. Additionally promotes intracellular retention of TNFRSF10A/TRAIL-R1 and TNFRSF10B/TRAIL-R2 and thus down-regulates their cell surface expression. In Human cytomegalovirus (strain Merlin) (HHV-5), this protein is Protein UL141 (UL141).